The sequence spans 150 residues: Large ribosomal subunit protein uL13 (150 aa).

It belongs to the universal ribosomal protein uL13 family. As to quaternary structure, part of the 50S ribosomal subunit.

Its function is as follows. This protein is one of the early assembly proteins of the 50S ribosomal subunit, although it is not seen to bind rRNA by itself. It is important during the early stages of 50S assembly. The protein is Large ribosomal subunit protein uL13 of Chlamydia abortus (strain DSM 27085 / S26/3) (Chlamydophila abortus).